The primary structure comprises 238 residues: Leucyl/phenylalanyl-tRNA--protein transferase (238 aa).

The protein belongs to the L/F-transferase family.

It localises to the cytoplasm. It catalyses the reaction N-terminal L-lysyl-[protein] + L-leucyl-tRNA(Leu) = N-terminal L-leucyl-L-lysyl-[protein] + tRNA(Leu) + H(+). The enzyme catalyses N-terminal L-arginyl-[protein] + L-leucyl-tRNA(Leu) = N-terminal L-leucyl-L-arginyl-[protein] + tRNA(Leu) + H(+). It carries out the reaction L-phenylalanyl-tRNA(Phe) + an N-terminal L-alpha-aminoacyl-[protein] = an N-terminal L-phenylalanyl-L-alpha-aminoacyl-[protein] + tRNA(Phe). Functionally, functions in the N-end rule pathway of protein degradation where it conjugates Leu, Phe and, less efficiently, Met from aminoacyl-tRNAs to the N-termini of proteins containing an N-terminal arginine or lysine. The sequence is that of Leucyl/phenylalanyl-tRNA--protein transferase from Psychromonas ingrahamii (strain DSM 17664 / CCUG 51855 / 37).